The sequence spans 27 residues: Potassium channel toxin kappa-KTx 2.2 (27 aa).

2 cysteine pairs are disulfide-bonded: C3–C21 and C7–C17.

This sequence belongs to the short scorpion toxin superfamily. Potassium channel inhibitor kappa-KTx family. Kappa-KTx 2 subfamily. As to expression, expressed by the venom gland.

It is found in the secreted. Its function is as follows. OmTx1 decreases the amplitude of the potassium current of the rat channels Kv1.1/KCNA1 by 17% and Kv1.2/KCNA2 by 12% as well as human Kv1.3/KCNA3 by 24%. In terms of biological role, omTx2 decreases the amplitude of the potassium current of the rat channels Kv1.1/KCNA1 by 8% and Kv1.2/KCNA2 by 10% as well as human Kv1.3/KCNA3 by 36%. Also alters glucose-induced insulin release from pancreatic islets. The chain is Potassium channel toxin kappa-KTx 2.2 from Opisthacanthus madagascariensis (Scorpion).